The primary structure comprises 155 residues: Reticulon-like protein B23 (155 aa).

Positions 1 to 155 (MGEMGKAIGL…LNRRNGEILD (155 aa)) constitute a Reticulon domain. Transmembrane regions (helical) follow at residues 30–50 (SLIS…GLLF) and 117–137 (IISG…SMLF).

It is found in the endoplasmic reticulum membrane. This Arabidopsis thaliana (Mouse-ear cress) protein is Reticulon-like protein B23 (RTNLB23).